Here is a 78-residue protein sequence, read N- to C-terminus: UPF0270 protein YPTB3725 (78 aa).

This sequence belongs to the UPF0270 family.

The polypeptide is UPF0270 protein YPTB3725 (Yersinia pseudotuberculosis serotype I (strain IP32953)).